The chain runs to 31 residues: MESVAYILVLTMTLAVLFFAIAFREPPRIQK.

Residues S3–F23 traverse the membrane as a helical segment.

Belongs to the PsbT family. As to quaternary structure, PSII is composed of 1 copy each of membrane proteins PsbA, PsbB, PsbC, PsbD, PsbE, PsbF, PsbH, PsbI, PsbJ, PsbK, PsbL, PsbM, PsbT, PsbX, PsbY, PsbZ, Psb30/Ycf12, peripheral proteins PsbO, CyanoQ (PsbQ), PsbU, PsbV and a large number of cofactors. It forms dimeric complexes.

The protein localises to the cellular thylakoid membrane. In terms of biological role, found at the monomer-monomer interface of the photosystem II (PS II) dimer, plays a role in assembly and dimerization of PSII. PSII is a light-driven water plastoquinone oxidoreductase, using light energy to abstract electrons from H(2)O, generating a proton gradient subsequently used for ATP formation. The chain is Photosystem II reaction center protein T from Rippkaea orientalis (strain PCC 8801 / RF-1) (Cyanothece sp. (strain PCC 8801)).